The sequence spans 239 residues: Probable 2-phosphosulfolactate phosphatase (239 aa).

Belongs to the ComB family. The cofactor is Mg(2+).

The enzyme catalyses (2R)-O-phospho-3-sulfolactate + H2O = (2R)-3-sulfolactate + phosphate. The chain is Probable 2-phosphosulfolactate phosphatase from Clostridium botulinum (strain Loch Maree / Type A3).